We begin with the raw amino-acid sequence, 134 residues long: Ribonuclease P protein component (134 aa).

This sequence belongs to the RnpA family. In terms of assembly, consists of a catalytic RNA component (M1 or rnpB) and a protein subunit.

The catalysed reaction is Endonucleolytic cleavage of RNA, removing 5'-extranucleotides from tRNA precursor.. Functionally, RNaseP catalyzes the removal of the 5'-leader sequence from pre-tRNA to produce the mature 5'-terminus. It can also cleave other RNA substrates such as 4.5S RNA. The protein component plays an auxiliary but essential role in vivo by binding to the 5'-leader sequence and broadening the substrate specificity of the ribozyme. The polypeptide is Ribonuclease P protein component (Ectopseudomonas mendocina (strain ymp) (Pseudomonas mendocina)).